A 614-amino-acid polypeptide reads, in one-letter code: Glutamine--fructose-6-phosphate aminotransferase [isomerizing] (614 aa).

The Nucleophile; for GATase activity role is filled by Cys-2. Residues 2–223 (CGIIGYIGRR…DGEMAVVTRD (222 aa)) form the Glutamine amidotransferase type-2 domain. SIS domains are found at residues 292 to 431 (YLDR…GRTI) and 463 to 604 (IAVK…VDRP). Lys-609 acts as the For Fru-6P isomerization activity in catalysis.

As to quaternary structure, homodimer.

Its subcellular location is the cytoplasm. It catalyses the reaction D-fructose 6-phosphate + L-glutamine = D-glucosamine 6-phosphate + L-glutamate. Functionally, catalyzes the first step in hexosamine metabolism, converting fructose-6P into glucosamine-6P using glutamine as a nitrogen source. This Chlorobaculum tepidum (strain ATCC 49652 / DSM 12025 / NBRC 103806 / TLS) (Chlorobium tepidum) protein is Glutamine--fructose-6-phosphate aminotransferase [isomerizing].